The primary structure comprises 249 residues: Galactan endo-beta-1,3-galactanase (249 aa).

The N-terminal stretch at 1 to 21 (MKLFVVLACLAAPGTFPFVDA) is a signal peptide. Residues 34-247 (STYWNNFYPW…KARNVQVTRT (214 aa)) form the GH16 domain. Residue Asn-48 is glycosylated (N-linked (GlcNAc...) asparagine). Glu-138 acts as the Nucleophile in catalysis. Glu-143 (proton donor) is an active-site residue. Asn-156 carries an N-linked (GlcNAc...) asparagine glycan.

It belongs to the glycosyl hydrolase 16 family. N-glycosylated.

The catalysed reaction is The enzyme specifically hydrolyzes beta-1,3-galactan and beta-1,3-galactooligosaccharides.. Functionally, specifically hydrolyzes beta-1,3-galactan in an endo-fashion. Requires at least 3 contiguous beta-1,3-residues. The polypeptide is Galactan endo-beta-1,3-galactanase (EN3GAL) (Flammulina velutipes (Agaricus velutipes)).